We begin with the raw amino-acid sequence, 234 residues long: MEYTRETMQKMRREELKNIAISYRIYNGYHERPISKMRKSDFIDFIHESVTTPNHSPNTRETILQNANRQEGRRRGLRPSSDGNLRRENRHNEDVIVHFIPSPLSSRHSPISFRDTLRDFDARRRIDFGSSLMGGPLGLLDVVINVLNSTSLDDEEQHELNNEEFTGTIPTEVEEENEAHETVRCAVCLHNKVCVLFQKCKHVITCGPCSLRIKECPVCKRIVESSDKIRIFLP.

The tract at residues 65–89 (QNANRQEGRRRGLRPSSDGNLRREN) is disordered. The segment at 185-220 (CAVCLHNKVCVLFQKCKHVITCGPCSLRIKECPVCK) adopts an RING-type zinc-finger fold.

The protein belongs to the IIV-6 175R/332L family.

This is an uncharacterized protein from Acheta domesticus (House cricket).